The chain runs to 274 residues: uncharacterized protein (274 aa).

Residues 1–17 (MKKLLAGFLTLSLALAA) form the signal peptide. Cys18 is lipidated: N-palmitoyl cysteine. Cys18 carries the S-diacylglycerol cysteine lipid modification. Residues 18-169 (CSNGSDDDSS…DANNGASSAN (152 aa)) are disordered. Basic and acidic residues predominate over residues 25-76 (DSSKKDDSSKDNQSSDDKSKDSKNDDKKNNDSDKDKDNNSDSDKNSDSKSDD). The span at 91–169 (SDNASGSDSS…DANNGASSAN (79 aa)) shows a compositional bias: low complexity.

The protein localises to the cell membrane. This is an uncharacterized protein from Staphylococcus saprophyticus subsp. saprophyticus (strain ATCC 15305 / DSM 20229 / NCIMB 8711 / NCTC 7292 / S-41).